The sequence spans 204 residues: MTDSYENLLKKAYSHISEKSASSERFVVPEAKAYVEGKTTILENFAEIADTVRRDKDHLMKYMLGELGTSGKIEGNRAIFNGKFEISQIRMIIKSYVDDYVICSECGKPDTRLVKDDRVLLLRCDACGGHRPVRKRKARTEPASENLEEGQVLDVEIQSLSKRGDGVVKMGRYIMYVSNAKPGQSVKIKISRISGSIVFTERAE.

A TRAM domain is found at 146–204; that stretch reads NLEEGQVLDVEIQSLSKRGDGVVKMGRYIMYVSNAKPGQSVKIKISRISGSIVFTERAE.

The protein belongs to the eIF-2-beta/eIF-5 family. In terms of assembly, heterotrimer composed of an alpha, a beta and a gamma chain.

Functionally, eIF-2 functions in the early steps of protein synthesis by forming a ternary complex with GTP and initiator tRNA. The polypeptide is Translation initiation factor 2 subunit beta (Methanoregula boonei (strain DSM 21154 / JCM 14090 / 6A8)).